The chain runs to 687 residues: C-mannosyltransferase dpy-19 (687 aa).

Helical transmembrane passes span 24 to 44, 170 to 190, 191 to 211, 223 to 243, 253 to 273, 276 to 296, 303 to 323, 324 to 344, 347 to 367, 415 to 435, and 454 to 474; these read GISG…VGFL, ITGV…LGVL, VSDS…NHGE, ESFA…IIKY, LLIS…FAFF, ICSI…AKTI, AFFI…ALYF, PSIW…GIRL, LYLL…KVGF, LSST…SWDF, and GEVI…VLIM.

It belongs to the dpy-19 family.

It is found in the endoplasmic reticulum membrane. Its function is as follows. C-mannosyltransferase that mediates C-mannosylation of tryptophan residues on target proteins such as unc-5 and mig-21. Mediates the attachment of alpha-mannose in C-C linkage to the C2 of the indole ring of tryptophan. C-mannosylation takes place in the endoplasmic reticulum and frequently found in thrombospondin (TSP) type-1 repeats and in the WSXWS motif of type I cytokine receptors. Required to orient neuroblasts QL and QR correctly on the anterior/posterior (A/P) axis: QL and QR are born in the same A/P position, but polarize and migrate left/right asymmetrically, QL migrates toward the posterior and QR migrates toward the anterior. Required with unc-40 to express mab-5 correctly in the Q cell descendants. This is C-mannosyltransferase dpy-19 from Caenorhabditis briggsae.